The sequence spans 222 residues: MSNDPGNEVSSLYPPPPPYVKFFTQSNLEKLPKYKEKKAASAKQTAPNNSNGGSEEEITCALDYLIPPPMPKNQQYRAFGSIWQVKDQLPDLESMGLTQLYKKSTENESTNYQYKIQELRKLLKSLLLNYLELIGVLSINPDMYERKVENIRTILVNIHHLLNEYRPHQSRESLIMLLEEQLEYKRGEIREIEQVCKQVHDKLTSIQDTLRTGSQSPPSSSQ.

The interval 34–55 (YKEKKAASAKQTAPNNSNGGSE) is disordered. A compositionally biased stretch (polar residues) spans 42–53 (AKQTAPNNSNGG).

The protein belongs to the Mediator complex subunit 7 family. In terms of assembly, component of the Mediator complex, which is composed of at least 21 subunits that form three structurally distinct submodules. The Mediator head module contains MED6, MED8, MED11, SRB4/MED17, SRB5/MED18, ROX3/MED19, SRB2/MED20 and SRB6/MED22, the middle module contains MED1, MED4, NUT1/MED5, MED7, CSE2/MED9, NUT2/MED10, SRB7/MED21 and SOH1/MED31, and the tail module contains MED2, PGD1/MED3, RGR1/MED14, GAL11/MED15 and SIN4/MED16. The head and the middle modules interact directly with RNA polymerase II, whereas the elongated tail module interacts with gene-specific regulatory proteins. MED7 interacts directly with MED1, MED4 and SRB7/MED21.

Its subcellular location is the nucleus. Its function is as follows. Component of the Mediator complex, a coactivator involved in the regulated transcription of nearly all RNA polymerase II-dependent genes. Mediator functions as a bridge to convey information from gene-specific regulatory proteins to the basal RNA polymerase II transcription machinery. The Mediator complex, having a compact conformation in its free form, is recruited to promoters by direct interactions with regulatory proteins and serves for the assembly of a functional preinitiation complex with RNA polymerase II and the general transcription factors. The Mediator complex unfolds to an extended conformation and partially surrounds RNA polymerase II, specifically interacting with the unphosphorylated form of the C-terminal domain (CTD) of RNA polymerase II. The Mediator complex dissociates from the RNA polymerase II holoenzyme and stays at the promoter when transcriptional elongation begins. This chain is Mediator of RNA polymerase II transcription subunit 7 (MED7), found in Saccharomyces cerevisiae (strain ATCC 204508 / S288c) (Baker's yeast).